Here is an 84-residue protein sequence, read N- to C-terminus: MPKKAASPEIKAASFETSLSELEQIVTRLESGELPLEDALNEFERGVQLVRQGQQTLLQAEQRVQILLSDDVDAPLKPFTPDTE.

It belongs to the XseB family. In terms of assembly, heterooligomer composed of large and small subunits.

It localises to the cytoplasm. The catalysed reaction is Exonucleolytic cleavage in either 5'- to 3'- or 3'- to 5'-direction to yield nucleoside 5'-phosphates.. Functionally, bidirectionally degrades single-stranded DNA into large acid-insoluble oligonucleotides, which are then degraded further into small acid-soluble oligonucleotides. The sequence is that of Exodeoxyribonuclease 7 small subunit from Yersinia pseudotuberculosis serotype O:3 (strain YPIII).